Consider the following 300-residue polypeptide: Arginine/serine-rich protein 1 (300 aa).

The disordered stretch occupies residues 1–142; it reads MSSAAVSKYV…RGRSHHRRSY (142 aa). Phosphoserine is present on S17. The span at 23–36 shows a compositional bias: low complexity; the sequence is SPSTSGSGRSSRLS. Residues 37 to 104 are compositionally biased toward basic residues; that stretch reads SRSRSRSSSR…RSRSRSRGHR (68 aa). Residues 105–115 are compositionally biased toward basic and acidic residues; that stretch reads YYRDSRYEQPR. Positions 116-125 are enriched in low complexity; it reads RYYQSPSPYR. Phosphoserine is present on residues S120 and S122. Over residues 126–141 the composition is skewed to basic residues; that stretch reads SRSRSRSRGRSHHRRS. The residue at position 147 (R147) is an Omega-N-methylarginine. The disordered stretch occupies residues 222–300; the sequence is QGAVSCSGPK…KSPYGLWIPV (79 aa). Positions 268–277 are enriched in basic and acidic residues; the sequence is PLEKTTKAAV. S284 is subject to Phosphoserine.

It belongs to the RSRP family. Phosphorylated. Phosphorylation at Ser-120 and Ser-122 mediates the interaction with spliceosome proteins.

It is found in the nucleus. In terms of biological role, probably acts as a spliceosomal factor that contributes to spliceosome assembly and regulates the isoform switching of proteins such as PARP6. In Rattus norvegicus (Rat), this protein is Arginine/serine-rich protein 1 (Rsrp1).